We begin with the raw amino-acid sequence, 121 residues long: Small ribosomal subunit protein uS13 (121 aa).

A disordered region spans residues 93–121 (KGLPMRGQRTRTNARTRKGPRRAAQALKK).

This sequence belongs to the universal ribosomal protein uS13 family. Part of the 30S ribosomal subunit. Forms a loose heterodimer with protein S19. Forms two bridges to the 50S subunit in the 70S ribosome.

Located at the top of the head of the 30S subunit, it contacts several helices of the 16S rRNA. In the 70S ribosome it contacts the 23S rRNA (bridge B1a) and protein L5 of the 50S subunit (bridge B1b), connecting the 2 subunits; these bridges are implicated in subunit movement. Contacts the tRNAs in the A and P-sites. The protein is Small ribosomal subunit protein uS13 of Burkholderia ambifaria (strain ATCC BAA-244 / DSM 16087 / CCUG 44356 / LMG 19182 / AMMD) (Burkholderia cepacia (strain AMMD)).